A 192-amino-acid chain; its full sequence is Orotate phosphoribosyltransferase (192 aa).

5-phospho-alpha-D-ribose 1-diphosphate is bound at residue E116–S124. Orotate contacts are provided by T120 and R148.

Belongs to the purine/pyrimidine phosphoribosyltransferase family. PyrE subfamily. As to quaternary structure, homodimer. It depends on Mg(2+) as a cofactor.

The catalysed reaction is orotidine 5'-phosphate + diphosphate = orotate + 5-phospho-alpha-D-ribose 1-diphosphate. The protein operates within pyrimidine metabolism; UMP biosynthesis via de novo pathway; UMP from orotate: step 1/2. In terms of biological role, catalyzes the transfer of a ribosyl phosphate group from 5-phosphoribose 1-diphosphate to orotate, leading to the formation of orotidine monophosphate (OMP). This Bartonella tribocorum (strain CIP 105476 / IBS 506) protein is Orotate phosphoribosyltransferase.